A 127-amino-acid polypeptide reads, in one-letter code: Small ribosomal subunit protein uS13 (127 aa).

Positions 90–127 (RRHRQGLPVRGQRTRTNARTRRGRRVTVAGKKKAPSKK) are disordered. The segment covering 101 to 127 (QRTRTNARTRRGRRVTVAGKKKAPSKK) has biased composition (basic residues).

Belongs to the universal ribosomal protein uS13 family. In terms of assembly, part of the 30S ribosomal subunit. Forms a loose heterodimer with protein S19. Forms two bridges to the 50S subunit in the 70S ribosome.

Its function is as follows. Located at the top of the head of the 30S subunit, it contacts several helices of the 16S rRNA. In the 70S ribosome it contacts the 23S rRNA (bridge B1a) and protein L5 of the 50S subunit (bridge B1b), connecting the 2 subunits; these bridges are implicated in subunit movement. Contacts the tRNAs in the A and P-sites. The sequence is that of Small ribosomal subunit protein uS13 from Rippkaea orientalis (strain PCC 8801 / RF-1) (Cyanothece sp. (strain PCC 8801)).